Consider the following 414-residue polypeptide: HERV-H LTR-associating protein 2 (414 aa).

Positions 1–22 (MKAQTALSFFLILITSLSGSQG) are cleaved as a signal peptide. Residues 61 to 131 (IHWKYQDSYK…YVGTAIQVIT (71 aa)) form the Ig-like V-type 1 domain. N-linked (GlcNAc...) asparagine glycans are attached at residues N90 and N103. An Ig-like C1-type domain is found at 138–222 (VGVFLTPVMK…ENSLLKQTWT (85 aa)). Intrachain disulfides connect C159-C210 and C243-C317. The Ig-like V-type 2 domain occupies 235-328 (QSEHVSLSCQ…ISSDEYTLLT (94 aa)). N-linked (GlcNAc...) asparagine glycosylation occurs at N318. The helical transmembrane segment at 345-365 (KGLWILVPSAILAAFLLIWSV) threads the bilayer. The disordered stretch occupies residues 383–414 (GAQQERCCVPPGERCPSAPDNGEENVPLSGKV).

In terms of assembly, interacts with TMIGD2. As to expression, expressed at high levels in colon, kidney, testis, lung and pancreas, and at lower levels in small intestine, liver and skeletal muscle. In immune cells, highly expressed in B-cells, dendritic cells and macrophages. Not detected in T-cells.

Its subcellular location is the membrane. Through interaction with TMIGD2, costimulates T-cells in the context of TCR-mediated activation. Enhances T-cell proliferation and cytokine production via an AKT-dependent signaling cascade. This Homo sapiens (Human) protein is HERV-H LTR-associating protein 2 (HHLA2).